A 500-amino-acid polypeptide reads, in one-letter code: L-arabinose isomerase (500 aa).

Positions 306, 333, 350, and 450 each coordinate Mn(2+).

It belongs to the arabinose isomerase family. As to quaternary structure, homohexamer. Mn(2+) is required as a cofactor.

The catalysed reaction is beta-L-arabinopyranose = L-ribulose. It participates in carbohydrate degradation; L-arabinose degradation via L-ribulose; D-xylulose 5-phosphate from L-arabinose (bacterial route): step 1/3. In terms of biological role, catalyzes the conversion of L-arabinose to L-ribulose. This Escherichia coli (strain 55989 / EAEC) protein is L-arabinose isomerase.